Here is a 371-residue protein sequence, read N- to C-terminus: Peptide chain release factor 2 (371 aa).

N5-methylglutamine is present on Q252.

It belongs to the prokaryotic/mitochondrial release factor family. In terms of processing, methylated by PrmC. Methylation increases the termination efficiency of RF2.

It is found in the cytoplasm. Its function is as follows. Peptide chain release factor 2 directs the termination of translation in response to the peptide chain termination codons UGA and UAA. This Staphylococcus epidermidis (strain ATCC 35984 / DSM 28319 / BCRC 17069 / CCUG 31568 / BM 3577 / RP62A) protein is Peptide chain release factor 2.